The primary structure comprises 84 residues: Small ribosomal subunit protein uS17 (84 aa).

It belongs to the universal ribosomal protein uS17 family. In terms of assembly, part of the 30S ribosomal subunit.

Functionally, one of the primary rRNA binding proteins, it binds specifically to the 5'-end of 16S ribosomal RNA. The protein is Small ribosomal subunit protein uS17 of Pectobacterium atrosepticum (strain SCRI 1043 / ATCC BAA-672) (Erwinia carotovora subsp. atroseptica).